The chain runs to 659 residues: Zeaxanthin epoxidase, chloroplastic (659 aa).

The transit peptide at 1–50 (MALLSATAPAKTRFSLFSHEEAQHPHPHALSACCGGGASGKRQRARARVA) directs the protein to the chloroplast. FAD contacts are provided by residues 79-107 (RVLV…TVFE) and 357-370 (TFNW…LLGD). The FHA domain maps to 553 to 607 (LSIGSRSDPSNSTASLALPLPQISENHATITCKNKAFYVTDNGSEHGTWITDNEG).

Requires FAD as cofactor. As to expression, expressed in young microspores.

The protein resides in the plastid. The protein localises to the chloroplast membrane. It localises to the chloroplast thylakoid membrane. It catalyses the reaction all-trans-zeaxanthin + 4 reduced [2Fe-2S]-[ferredoxin] + 2 O2 + 4 H(+) = all-trans-violaxanthin + 4 oxidized [2Fe-2S]-[ferredoxin] + 2 H2O. It participates in plant hormone biosynthesis; abscisate biosynthesis. Zeaxanthin epoxidase that plays an important role in the xanthophyll cycle and abscisic acid (ABA) biosynthesis. Converts zeaxanthin into antheraxanthin and subsequently violaxanthin. Required for resistance to osmotic and drought stresses, seed development and dormancy. This Oryza sativa subsp. japonica (Rice) protein is Zeaxanthin epoxidase, chloroplastic (ZEP).